Consider the following 293-residue polypeptide: Elongation factor Ts (293 aa).

The tract at residues 80–83 (TDFV) is involved in Mg(2+) ion dislocation from EF-Tu.

Belongs to the EF-Ts family.

The protein localises to the cytoplasm. Its function is as follows. Associates with the EF-Tu.GDP complex and induces the exchange of GDP to GTP. It remains bound to the aminoacyl-tRNA.EF-Tu.GTP complex up to the GTP hydrolysis stage on the ribosome. The polypeptide is Elongation factor Ts (Lacticaseibacillus casei (strain BL23) (Lactobacillus casei)).